The sequence spans 374 residues: Biotin synthase (374 aa).

Positions asparagine 49–arginine 276 constitute a Radical SAM core domain. The [4Fe-4S] cluster site is built by cysteine 64, cysteine 68, and cysteine 71. The [2Fe-2S] cluster site is built by cysteine 108, cysteine 139, cysteine 199, and arginine 271. The tract at residues glutamine 344–alanine 374 is disordered.

Belongs to the radical SAM superfamily. Biotin synthase family. Homodimer. The cofactor is [4Fe-4S] cluster. [2Fe-2S] cluster is required as a cofactor.

It carries out the reaction (4R,5S)-dethiobiotin + (sulfur carrier)-SH + 2 reduced [2Fe-2S]-[ferredoxin] + 2 S-adenosyl-L-methionine = (sulfur carrier)-H + biotin + 2 5'-deoxyadenosine + 2 L-methionine + 2 oxidized [2Fe-2S]-[ferredoxin]. It participates in cofactor biosynthesis; biotin biosynthesis; biotin from 7,8-diaminononanoate: step 2/2. In terms of biological role, catalyzes the conversion of dethiobiotin (DTB) to biotin by the insertion of a sulfur atom into dethiobiotin via a radical-based mechanism. This is Biotin synthase from Alteromonas mediterranea (strain DSM 17117 / CIP 110805 / LMG 28347 / Deep ecotype).